The following is a 427-amino-acid chain: ATP-dependent RNA helicase DDX39A (427 aa).

A compositionally biased stretch (acidic residues) spans 1–19 (MAEQDVENELLDYDEDEEP). Positions 1 to 36 (MAEQDVENELLDYDEDEEPQAPQESTPAPPKKDVKG) are disordered. N-acetylalanine is present on Ala2. Lys31 is covalently cross-linked (Glycyl lysine isopeptide (Lys-Gly) (interchain with G-Cter in SUMO2)). The residue at position 35 (Lys35) is an N6-acetyllysine; alternate. Lys35 is covalently cross-linked (Glycyl lysine isopeptide (Lys-Gly) (interchain with G-Cter in SUMO2); alternate). Residue Ser37 is modified to Phosphoserine. The short motif at 44–72 (SGFRDFLLKPELLRAIVDCGFEHPSEVQH) is the Q motif element. The Helicase ATP-binding domain maps to 75-248 (IPQAILGMDV…RKFMQDPMEV (174 aa)). 88–95 (AKSGMGKT) serves as a coordination point for ATP. Glycyl lysine isopeptide (Lys-Gly) (interchain with G-Cter in SUMO2) cross-links involve residues Lys154 and Lys162. A Phosphothreonine modification is found at Thr171. The short motif at 195-198 (DECD) is the DECD box element. Glycyl lysine isopeptide (Lys-Gly) (interchain with G-Cter in SUMO2) cross-links involve residues Lys240 and Lys255. In terms of domain architecture, Helicase C-terminal spans 260-421 (GLQQYYVKLK…ELPEEIDIST (162 aa)). Phosphoserine is present on Ser426.

The protein belongs to the DEAD box helicase family. DECD subfamily. In terms of assembly, binds ALYREF/THOC4 and DDX39B/BAT1. Interacts with the apo-AREX complex component SARNP. Interacts with MX1. Interacts with MCM3AP isoform GANP. Interacts with ECD. Interacts with PHAX; this interaction stimulates PHAX RNA binding activity. In terms of processing, SUMOylated by RANBP2; SUMOylation modification affects its ability to bind RNA.

Its subcellular location is the nucleus. It is found in the cytoplasm. The enzyme catalyses ATP + H2O = ADP + phosphate + H(+). Its function is as follows. Helicase that plays an essential role in mRNA export and is involved in multiple steps in RNA metabolism including alternative splicing. Regulates nuclear mRNA export to the cytoplasm through association with ECD. Also involved in spliceosomal uridine-rich small nuclear RNA (U snRNA) export by stimulating the RNA binding of adapter PHAX. Plays a role in the negative regulation of type I IFN production by increasing the nuclear retention of antiviral transcripts and thus reducing their protein expression. Independently of the interferon pathway, plays an antiviral role against alphaviruses by binding to a 5' conserved sequence element in the viral genomic RNA. This Mus musculus (Mouse) protein is ATP-dependent RNA helicase DDX39A.